Reading from the N-terminus, the 92-residue chain is Large ribosomal subunit protein eL43 (92 aa).

4 residues coordinate Zn(2+): cysteine 39, cysteine 42, cysteine 57, and cysteine 60. A C4-type zinc finger spans residues 39–60; it reads CPNCGEDRVDRQGTGIWQCSYC.

It belongs to the eukaryotic ribosomal protein eL43 family. Putative zinc-binding subfamily. In terms of assembly, part of the 50S ribosomal subunit. Contacts protein L2. Zn(2+) is required as a cofactor.

Functionally, binds to the 23S rRNA. The polypeptide is Large ribosomal subunit protein eL43 (Haloarcula marismortui (strain ATCC 43049 / DSM 3752 / JCM 8966 / VKM B-1809) (Halobacterium marismortui)).